Consider the following 198-residue polypeptide: Inner membrane-spanning protein YciB (198 aa).

5 consecutive transmembrane segments (helical) span residues Ile36 to Ile56, Leu67 to Phe87, Trp90 to Gly110, Ile135 to Phe155, and Phe162 to Leu182.

This sequence belongs to the YciB family.

It localises to the cell inner membrane. In terms of biological role, plays a role in cell envelope biogenesis, maintenance of cell envelope integrity and membrane homeostasis. The chain is Inner membrane-spanning protein YciB from Pseudomonas fluorescens (strain Pf0-1).